Reading from the N-terminus, the 220-residue chain is MNKIKSMLSVYFIAGSQDCRHLPGEPTENLLTILQRALEAGITCFQFREKGEQSLACDLQLKRRLALKCLQLCRQFQVPFIVNDDVELALSIQADGIHVGQKDTAVETILRNTRNKPIIGLSINTLAQALANKDRQDIDYFGVGPIFPTNSKADHSPLVGMNFIRQIRQLGIDKPCVAIGGIKEESAAILRRLGADGVAVISAISHSVNIANTVKTLAQK.

4-amino-2-methyl-5-(diphosphooxymethyl)pyrimidine is bound by residues 46 to 50 (QFREK) and asparagine 83. Mg(2+)-binding residues include aspartate 84 and aspartate 103. Serine 122 provides a ligand contact to 4-amino-2-methyl-5-(diphosphooxymethyl)pyrimidine. A 2-[(2R,5Z)-2-carboxy-4-methylthiazol-5(2H)-ylidene]ethyl phosphate-binding site is contributed by 149 to 151 (TNS). Lysine 152 lines the 4-amino-2-methyl-5-(diphosphooxymethyl)pyrimidine pocket. Residues glycine 181 and 201–202 (IS) contribute to the 2-[(2R,5Z)-2-carboxy-4-methylthiazol-5(2H)-ylidene]ethyl phosphate site.

This sequence belongs to the thiamine-phosphate synthase family. It depends on Mg(2+) as a cofactor.

The catalysed reaction is 2-[(2R,5Z)-2-carboxy-4-methylthiazol-5(2H)-ylidene]ethyl phosphate + 4-amino-2-methyl-5-(diphosphooxymethyl)pyrimidine + 2 H(+) = thiamine phosphate + CO2 + diphosphate. It catalyses the reaction 2-(2-carboxy-4-methylthiazol-5-yl)ethyl phosphate + 4-amino-2-methyl-5-(diphosphooxymethyl)pyrimidine + 2 H(+) = thiamine phosphate + CO2 + diphosphate. It carries out the reaction 4-methyl-5-(2-phosphooxyethyl)-thiazole + 4-amino-2-methyl-5-(diphosphooxymethyl)pyrimidine + H(+) = thiamine phosphate + diphosphate. It functions in the pathway cofactor biosynthesis; thiamine diphosphate biosynthesis; thiamine phosphate from 4-amino-2-methyl-5-diphosphomethylpyrimidine and 4-methyl-5-(2-phosphoethyl)-thiazole: step 1/1. Its function is as follows. Condenses 4-methyl-5-(beta-hydroxyethyl)thiazole monophosphate (THZ-P) and 2-methyl-4-amino-5-hydroxymethyl pyrimidine pyrophosphate (HMP-PP) to form thiamine monophosphate (TMP). The sequence is that of Thiamine-phosphate synthase from Mannheimia succiniciproducens (strain KCTC 0769BP / MBEL55E).